The primary structure comprises 334 residues: MGRRSSDTEEESRSKRKKKHRRRSSSSSSSDSRTYSRKKGGRRPRSESRSWSRDRQPRSHSYERRRRRRSSSSSSYGSRRKRSRSRSRGRGKSYRVQRSRSKSRTRRSRSRPRPRSHSRSSERSSHRRTRSRSRDRDRRKVRDKEKREKEKDKGKDKEAHTIKRGDCGNIKAGLEHLPPAEQAKARLQLVLEAAAKADEALKAKERNEEEAKRRKEEDQATLGEQVKRVKEIEAIESDSFVQQTFRSSKDVKKSVEPSEVKHVTPASGPASVAADPPSTGKEIDPDSIPTAIKYQDDNSLAHPNLFIEKAEAEEKWFKRLIALRQERLMGSPVA.

Basic and acidic residues predominate over residues 1–13; the sequence is MGRRSSDTEEESR. 3 disordered regions span residues 1-173, 201-222, and 241-290; these read MGRR…IKAG, LKAK…QATL, and VQQT…SIPT. The segment covering 14–24 has biased composition (basic residues); the sequence is SKRKKKHRRRS. The segment covering 44–62 has biased composition (basic and acidic residues); it reads PRSESRSWSRDRQPRSHSY. Basic residues predominate over residues 78–118; it reads SRRKRSRSRSRGRGKSYRVQRSRSKSRTRRSRSRPRPRSHS. 3 stretches are compositionally biased toward basic and acidic residues: residues 132-166, 201-218, and 247-262; these read RSRD…KRGD, LKAK…KEED, and SSKD…EVKH. The stretch at 180–234 forms a coiled coil; sequence AEQAKARLQLVLEAAAKADEALKAKERNEEEAKRRKEEDQATLGEQVKRVKEIEA.

In terms of assembly, interacts (via Arg/Ser-rich domain) with LUC7L3, RBM39 and RSF1. In terms of processing, phosphorylated.

Its subcellular location is the nucleus speckle. It is found in the nucleus. It localises to the cytoplasm. Functionally, plays a role in pre-mRNA splicing. Involved in both constitutive and alternative pre-mRNA splicing. May have a role in the recognition of the 3' splice site during the second step of splicing. The protein is Serine/Arginine-related protein 53 (Rsrc1) of Rattus norvegicus (Rat).